The chain runs to 343 residues: General stress protein 30 (343 aa).

The protein belongs to the polysaccharide pyruvyl transferase family.

The chain is General stress protein 30 (yxaB) from Bacillus subtilis (strain 168).